Here is a 285-residue protein sequence, read N- to C-terminus: GPN-loop GTPase 3 (285 aa).

A GTP-binding site is contributed by 13–18; that stretch reads GSGKST. A Gly-Pro-Asn (GPN)-loop; involved in dimer interface motif is present at residues 72 to 74; the sequence is GPN. 174–177 serves as a coordination point for GTP; the sequence is TKMD. Residues 261 to 285 form a disordered region; it reads KEPKENEEDKSENFDEFFQDRADEP. The segment covering 265–277 has biased composition (acidic residues); that stretch reads ENEEDKSENFDEF.

Belongs to the GPN-loop GTPase family. Heterodimer with gpn1. Binds to RNA polymerase II (RNAPII).

Its function is as follows. Small GTPase required for proper localization of RNA polymerase II (RNAPII). May act at an RNAP assembly step prior to nuclear import. The chain is GPN-loop GTPase 3 from Xenopus tropicalis (Western clawed frog).